The primary structure comprises 276 residues: Sulfur carrier protein FdhD (276 aa).

The Cysteine persulfide intermediate role is filled by Cys122. Position 259-264 (259-264 (FCKPGK)) interacts with Mo-bis(molybdopterin guanine dinucleotide).

It belongs to the FdhD family.

The protein localises to the cytoplasm. Its function is as follows. Required for formate dehydrogenase (FDH) activity. Acts as a sulfur carrier protein that transfers sulfur from IscS to the molybdenum cofactor prior to its insertion into FDH. This is Sulfur carrier protein FdhD from Photorhabdus laumondii subsp. laumondii (strain DSM 15139 / CIP 105565 / TT01) (Photorhabdus luminescens subsp. laumondii).